The sequence spans 342 residues: Prenyl transferase penC (342 aa).

A helical membrane pass occupies residues 17–37 (LSYLTLTVGALALVVVLYISI). H110 contacts isopentenyl diphosphate. Residues D117 and D121 each contribute to the Mg(2+) site. R126 is a dimethylallyl diphosphate binding site. N154 carries N-linked (GlcNAc...) asparagine glycosylation. K210 lines the dimethylallyl diphosphate pocket.

It belongs to the FPP/GGPP synthase family.

It is found in the membrane. It participates in secondary metabolite biosynthesis. Functionally, prenyl transferase; part of the gene cluster that mediates the biosynthesis of the indole diterpenes penitrems. The geranylgeranyl diphosphate (GGPP) synthase penG catalyzes the first step in penitrem biosynthesis via conversion of farnesyl pyrophosphate and isopentyl pyrophosphate into geranylgeranyl pyrophosphate (GGPP). Condensation of indole-3-glycerol phosphate with GGPP by the prenyl transferase penC then forms 3-geranylgeranylindole (3-GGI). Epoxidation by the FAD-dependent monooxygenase penM leads to a epoxidized-GGI that is substrate of the terpene cyclase penB for cyclization to yield paspaline. Paspaline is subsequently converted to 13-desoxypaxilline by the cytochrome P450 monooxygenase penP, the latter being then converted to paxilline by the cytochrome P450 monooxygenase penQ. Paxilline is converted to beta-paxitriol via C-10 ketoreduction by the short-chain dehydrogenase PC-15 which can be monoprenylated at the C-20 by the indole diterpene prenyltransferase penD. A two-step elimination (acetylation and elimination) process performed by the O-acetyltransferase PC-16 and the P.simplicissimum ptmI-ortholog not yet identified in P.crustosum, leads to the production of the prenylated form of penijanthine. The FAD-linked oxidoreductase ptmO then converts the prenylated form of penijanthine into PC-M5 which is in turn transformed into PC-M4 by the aromatic dimethylallyltransferase PC-22. A series of oxidation steps involving 4 cytochrome P450 monooxygenases (PC-21, PC-05, PC-23, PC-20) and a FAD-dependent monooxygenase (PC-14) are required for the transformation of PC-M4 to penitrems A and E. Synthesis of these final products is proposed to proceed via penitrems D and C (PC-21, PC-05, PC-14) and penitrems B and F (PC-21, PC-05, PC-14, PC-23). The polypeptide is Prenyl transferase penC (Penicillium crustosum (Blue mold fungus)).